The primary structure comprises 526 residues: Glutamate--tRNA ligase, mitochondrial (526 aa).

Residues methionine 1–phenylalanine 38 constitute a mitochondrion transit peptide. Arginine 37–alanine 39 contacts L-glutamate. The 'HIGH' region signature appears at proline 42 to serine 50. An ATP-binding site is contributed by histidine 47. L-glutamate contacts are provided by residues glutamate 73, tyrosine 222–asparagine 226, and arginine 240. ATP is bound by residues glutamate 243 and lysine 278 to arginine 282. The short motif at lysine 278–arginine 282 is the 'KMSKS' region element.

This sequence belongs to the class-I aminoacyl-tRNA synthetase family. Glutamate--tRNA ligase type 1 subfamily.

It localises to the mitochondrion. It catalyses the reaction tRNA(Glu) + L-glutamate + ATP = L-glutamyl-tRNA(Glu) + AMP + diphosphate. In terms of biological role, catalyzes the attachment of glutamate to tRNA(Glu) in a two-step reaction: glutamate is first activated by ATP to form Glu-AMP and then transferred to the acceptor end of tRNA(Glu). This Schizosaccharomyces pombe (strain 972 / ATCC 24843) (Fission yeast) protein is Glutamate--tRNA ligase, mitochondrial (mse1).